Consider the following 398-residue polypeptide: Phosphoglycerate kinase (398 aa).

Substrate contacts are provided by residues 21–23, Arg-36, 59–62, Arg-119, and Arg-157; these read DFN and HLGR. ATP-binding positions include Lys-208, Gly-296, Glu-327, and 354-357; that span reads GGDS.

It belongs to the phosphoglycerate kinase family. In terms of assembly, monomer.

Its subcellular location is the cytoplasm. The enzyme catalyses (2R)-3-phosphoglycerate + ATP = (2R)-3-phospho-glyceroyl phosphate + ADP. Its pathway is carbohydrate degradation; glycolysis; pyruvate from D-glyceraldehyde 3-phosphate: step 2/5. This chain is Phosphoglycerate kinase, found in Streptococcus agalactiae serotype III (strain NEM316).